Here is a 575-residue protein sequence, read N- to C-terminus: Proline--tRNA ligase, cytoplasmic (575 aa).

It belongs to the class-II aminoacyl-tRNA synthetase family.

It localises to the cytoplasm. The enzyme catalyses tRNA(Pro) + L-proline + ATP = L-prolyl-tRNA(Pro) + AMP + diphosphate. The protein is Proline--tRNA ligase, cytoplasmic (PRS) of Candida albicans (Yeast).